A 468-amino-acid chain; its full sequence is UDP-N-acetylmuramoyl-L-alanine--L-glutamate ligase (468 aa).

ATP is bound at residue 122 to 128 (GTKGKST).

It belongs to the MurCDEF family. MurD2 subfamily.

It is found in the cytoplasm. The enzyme catalyses UDP-N-acetyl-alpha-D-muramoyl-L-alanine + L-glutamate + ATP = UDP-N-acetyl-alpha-D-muramoyl-L-alanyl-L-glutamate + ADP + phosphate + H(+). Its pathway is cell wall biogenesis; peptidoglycan biosynthesis. Functionally, cell wall formation. Catalyzes the addition of L-glutamate to the nucleotide precursor UDP-N-acetylmuramoyl-L-alanine. Has weak activity with D-glutamate. This Xanthomonas oryzae pv. oryzae (strain MAFF 311018) protein is UDP-N-acetylmuramoyl-L-alanine--L-glutamate ligase.